Reading from the N-terminus, the 145-residue chain is 3-dehydroquinate dehydratase (145 aa).

The active-site Proton acceptor is Tyr-24. Residues Asn-75, His-81, and Asp-88 each contribute to the substrate site. His-101 functions as the Proton donor in the catalytic mechanism. Residues 102–103 (LS) and Arg-112 contribute to the substrate site.

It belongs to the type-II 3-dehydroquinase family. In terms of assembly, homododecamer.

The enzyme catalyses 3-dehydroquinate = 3-dehydroshikimate + H2O. Its pathway is metabolic intermediate biosynthesis; chorismate biosynthesis; chorismate from D-erythrose 4-phosphate and phosphoenolpyruvate: step 3/7. Catalyzes a trans-dehydration via an enolate intermediate. The sequence is that of 3-dehydroquinate dehydratase from Phenylobacterium zucineum (strain HLK1).